Here is a 353-residue protein sequence, read N- to C-terminus: Inactive ADP-ribosyltransferase ARH2 (353 aa).

Residue Ser27 is modified to Phosphoserine.

It belongs to the ADP-ribosylglycohydrolase family. Expressed in the embryonic heart at E11.5.

The protein resides in the cytoplasm. It is found in the myofibril. The protein localises to the sarcomere. Its function is as follows. Required for myofibril assembly and outgrowth of the cardiac chambers in the developing heart. Appears to be catalytically inactive, showing no activity against O-acetyl-ADP-ribose. The sequence is that of Inactive ADP-ribosyltransferase ARH2 (Adprhl1) from Mus musculus (Mouse).